Reading from the N-terminus, the 532-residue chain is Putative sodium-dependent excitatory amino acid transporter glt-3 (532 aa).

Topologically, residues 1 to 5 (MGMKK) are cytoplasmic. 3 consecutive transmembrane segments (helical) span residues 6–26 (DLLL…GFVI), 46–66 (FMQI…ISAL), and 83–103 (IYYM…VSSI). Residues 104–181 (HPGDPELIHE…SEVLHKQTLT (78 aa)) are Extracellular-facing. Residues asparagine 164 and asparagine 169 are each glycosylated (N-linked (GlcNAc...) asparagine). 5 helical membrane passes run 182–202 (YTNE…GIIL), 222–242 (IIMR…LSLV), 264–284 (VTVI…LYFL), 352–372 (AVAV…MDLV), and 383–402 (IGSG…LTTV).

This sequence belongs to the dicarboxylate/amino acid:cation symporter (DAACS) (TC 2.A.23) family.

The protein resides in the membrane. This Caenorhabditis elegans protein is Putative sodium-dependent excitatory amino acid transporter glt-3 (glt-3).